Consider the following 191-residue polypeptide: Probable rho GDP-dissociation inhibitor (191 aa).

The tract at residues 1–22 (MSDHENTGENTSEYQYKQPPQK) is disordered. Positions 8-21 (GENTSEYQYKQPPQ) are enriched in polar residues.

It belongs to the Rho GDI family.

Its subcellular location is the cytoplasm. Regulates the GDP/GTP exchange reaction of the Rho proteins by inhibiting the dissociation of GDP from them, and the subsequent binding of GTP to them. The sequence is that of Probable rho GDP-dissociation inhibitor (rhi-1) from Caenorhabditis elegans.